The sequence spans 205 residues: Adenylyl-sulfate kinase (205 aa).

Residue 39-46 participates in ATP binding; that stretch reads GLSGAGKS. The Phosphoserine intermediate role is filled by Ser-113.

This sequence belongs to the APS kinase family.

It carries out the reaction adenosine 5'-phosphosulfate + ATP = 3'-phosphoadenylyl sulfate + ADP + H(+). It participates in sulfur metabolism; hydrogen sulfide biosynthesis; sulfite from sulfate: step 2/3. Catalyzes the synthesis of activated sulfate. The chain is Adenylyl-sulfate kinase from Vibrio parahaemolyticus serotype O3:K6 (strain RIMD 2210633).